We begin with the raw amino-acid sequence, 532 residues long: CTP synthase (532 aa).

The amidoligase domain stretch occupies residues Met-1–Ile-267. Ser-13 contributes to the CTP binding site. Residue Ser-13 participates in UTP binding. Residue Gly-14–Ile-19 participates in ATP binding. Tyr-54 is an L-glutamine binding site. Position 71 (Asp-71) interacts with ATP. 2 residues coordinate Mg(2+): Asp-71 and Glu-141. CTP is bound by residues Asp-148–Glu-150, Lys-188–Gln-193, and Lys-224. UTP-binding positions include Lys-188 to Gln-193 and Lys-224. Residues Glu-292–Lys-532 enclose the Glutamine amidotransferase type-1 domain. Gly-354 contributes to the L-glutamine binding site. The active-site Nucleophile; for glutamine hydrolysis is Cys-381. L-glutamine is bound by residues Leu-382–Gln-385, Glu-405, and Arg-462. Residues His-507 and Glu-509 contribute to the active site.

It belongs to the CTP synthase family. Homotetramer.

It catalyses the reaction UTP + L-glutamine + ATP + H2O = CTP + L-glutamate + ADP + phosphate + 2 H(+). The catalysed reaction is L-glutamine + H2O = L-glutamate + NH4(+). The enzyme catalyses UTP + NH4(+) + ATP = CTP + ADP + phosphate + 2 H(+). The protein operates within pyrimidine metabolism; CTP biosynthesis via de novo pathway; CTP from UDP: step 2/2. Its activity is regulated as follows. Allosterically activated by GTP, when glutamine is the substrate; GTP has no effect on the reaction when ammonia is the substrate. The allosteric effector GTP functions by stabilizing the protein conformation that binds the tetrahedral intermediate(s) formed during glutamine hydrolysis. Inhibited by the product CTP, via allosteric rather than competitive inhibition. Catalyzes the ATP-dependent amination of UTP to CTP with either L-glutamine or ammonia as the source of nitrogen. Regulates intracellular CTP levels through interactions with the four ribonucleotide triphosphates. This is CTP synthase from Mesoplasma florum (strain ATCC 33453 / NBRC 100688 / NCTC 11704 / L1) (Acholeplasma florum).